The sequence spans 293 residues: Triosephosphate isomerase (293 aa).

Asn25–Lys27 lines the substrate pocket. The active-site Electrophile is His117. Glu218 acts as the Proton acceptor in catalysis.

The protein belongs to the triosephosphate isomerase family. In terms of assembly, homodimer.

It localises to the cytoplasm. The catalysed reaction is D-glyceraldehyde 3-phosphate = dihydroxyacetone phosphate. It functions in the pathway carbohydrate biosynthesis; gluconeogenesis. The protein operates within carbohydrate degradation; glycolysis; D-glyceraldehyde 3-phosphate from glycerone phosphate: step 1/1. Functionally, involved in the gluconeogenesis. Catalyzes stereospecifically the conversion of dihydroxyacetone phosphate (DHAP) to D-glyceraldehyde-3-phosphate (G3P). This chain is Triosephosphate isomerase, found in Tropheryma whipplei (strain Twist) (Whipple's bacillus).